The following is a 940-amino-acid chain: Protein translocase subunit SecA 1 (940 aa).

Residues glutamine 83, glycine 101–threonine 105, and aspartate 490 contribute to the ATP site. The interval alanine 856–arginine 940 is disordered.

This sequence belongs to the SecA family. As to quaternary structure, monomer and homodimer. Part of the essential Sec protein translocation apparatus which comprises SecA, SecYEG and auxiliary proteins SecDF. Other proteins may also be involved.

Its subcellular location is the cell membrane. It is found in the cytoplasm. It catalyses the reaction ATP + H2O + cellular proteinSide 1 = ADP + phosphate + cellular proteinSide 2.. In terms of biological role, part of the Sec protein translocase complex. Interacts with the SecYEG preprotein conducting channel. Has a central role in coupling the hydrolysis of ATP to the transfer of proteins into and across the cell membrane, serving as an ATP-driven molecular motor driving the stepwise translocation of polypeptide chains across the membrane. The polypeptide is Protein translocase subunit SecA 1 (Mycolicibacterium paratuberculosis (strain ATCC BAA-968 / K-10) (Mycobacterium paratuberculosis)).